The following is a 368-amino-acid chain: Molybdenum import ATP-binding protein ModC (368 aa).

Residues 1–231 (MKGLQVAFKQ…QAMRPWQSFS (231 aa)) form the ABC transporter domain. 33-40 (GRSGAGKT) provides a ligand contact to ATP. One can recognise a Mop domain in the interval 292 to 363 (KTSIRNIIEA…IKGVSVTQRD (72 aa)).

Belongs to the ABC transporter superfamily. Molybdate importer (TC 3.A.1.8) family. The complex is composed of two ATP-binding proteins (ModC), two transmembrane proteins (ModB) and a solute-binding protein (ModA).

The protein resides in the cell inner membrane. It catalyses the reaction molybdate(out) + ATP + H2O = molybdate(in) + ADP + phosphate + H(+). Functionally, part of the ABC transporter complex ModABC involved in molybdenum import. Responsible for energy coupling to the transport system. The chain is Molybdenum import ATP-binding protein ModC from Vibrio vulnificus (strain YJ016).